Here is an 846-residue protein sequence, read N- to C-terminus: cGMP-dependent protein kinase (846 aa).

Residues Met1–Asp22 form an autoinhibitory segment region. 4 cNMP-binding domain regions span residues Val51–Ser166, Val169–Gly268, Ile288–Asn391, and Ile411–Ile510. 3',5'-cyclic GMP contacts are provided by Lys106, Gly115, Glu116, Ala118, Arg125, and Ser126. 3',5'-cyclic GMP is bound by residues Arg466, Gly475, Glu476, Ala478, Arg485, and Thr486. Residues Leu534–Phe791 form the Protein kinase domain. ATP contacts are provided by residues Ile540 to Val548 and Lys563. Residue Asp657 is the Proton acceptor of the active site. The region spanning Gly792–Phe846 is the AGC-kinase C-terminal domain. A disordered region spans residues Ile824–Phe846. Positions Glu825–Phe846 are enriched in acidic residues.

Belongs to the protein kinase superfamily. AGC Ser/Thr protein kinase family. cGMP subfamily. Monomer. Requires Mg(2+) as cofactor. Post-translationally, autophosphorylated.

Its subcellular location is the cytoplasm. It is found in the endoplasmic reticulum membrane. The catalysed reaction is L-seryl-[protein] + ATP = O-phospho-L-seryl-[protein] + ADP + H(+). It carries out the reaction L-threonyl-[protein] + ATP = O-phospho-L-threonyl-[protein] + ADP + H(+). With respect to regulation, activated by cGMP. Not activated by cAMP. cGMP binding allosterically triggers a conformational change at the alpha C-helix of cGMP-binding domain 4, which bridges the regulatory and catalytic domains, causing the capping triad, composed of Arg-477, Gln-525 and Asp-526, to form and stabilize the active conformation. The cGMP-binding domains acts cooperatively to activate PKG. In terms of biological role, serine/threonine protein kinase which acts as a downstream effector of the second messenger cGMP. Controls the release of Ca(2+) from intracellular stores by regulating phosphoinositide biosynthesis. Ca(2+) signals are essential for merozoite and sporozoite invasion and egress from host hepatocytes and erythrocytes, and, in the mosquito vector, for gametocyte activation, and ookinete and sporozoite motility. During the host liver stage, regulates the initial invasion of host hepatocytes by sporozoites by regulating sporozoite motility and microneme exocytosis. Following parasite development in the hepatocytes, required for the release of merosomes, a vesicle containing the mature merozoites. During the asexual blood stage, required for the progression from schizont to the ring stage following merozoite invasion of host erythrocytes and for merozoite egress. Regulates merozoite egress by promoting the release of exonemes and micronemes which contain proteins essential for egress. Phosphorylates CDPK1 predominantly at the late schizont stage; phosphorylation at 'Ser-64' regulates CDPK1 protein-protein interaction and phosphorylation at 'Thr-231' may regulate CDPK1 kinase activity. In the mosquito vector, required for the initiation of gametogenesis induced by xanthurenic acid, specifically the gametocyte differentiation from the crescent-shaped form to the spherical form. Required for the gliding motility of ookinetes to reach and penetrate the midgut epithelium by promoting Ca(2+)-mediated activation of CDPK1 and CDPK4. Also required for microneme secretion in ookinete by promoting Ca(2+)-mediated activation of CDPK3. In Plasmodium vivax (strain Salvador I), this protein is cGMP-dependent protein kinase.